Reading from the N-terminus, the 412-residue chain is NAD-dependent dihydropyrimidine dehydrogenase subunit PreT (412 aa).

Glutamate 286 contributes to the NAD(+) binding site.

This sequence belongs to the NADH dehydrogenase family. As to quaternary structure, heterotetramer of 2 PreA and 2 PreT subunits.

The catalysed reaction is 5,6-dihydrouracil + NAD(+) = uracil + NADH + H(+). It carries out the reaction 5,6-dihydrothymine + NAD(+) = thymine + NADH + H(+). Functionally, involved in pyrimidine base degradation. Catalyzes physiologically the reduction of uracil to 5,6-dihydrouracil (DHU) by using NADH as a specific cosubstrate. It also catalyzes the reverse reaction and the reduction of thymine to 5,6-dihydrothymine (DHT). The protein is NAD-dependent dihydropyrimidine dehydrogenase subunit PreT (preT) of Escherichia coli (strain K12).